The following is a 344-amino-acid chain: MRRLTLALDAMGGDFGPAVTVPAALQALVSYPQLELLLVGNPAAIHSLLVKTDSVLLERLTVIPAESVITSDAKPSQAIRASRGTSMRVALELIRDGRAQACVSAGNTGALMGLAKLVLKPLDGIERPALMVVLPHKKQGKTVVLDLGANVACDGAMLAQFAVMGSVMAEHIVGVTNPRVALLNIGEEETKGLDPIQHAAVLLRDVQSINYIGYLEANELLTGKTDVLVCDGFVGNVTLKTMEGVIRVFLSLLKSSGESGRQGWLMQWVKRWMKRRLMRQFGQLNPDQYNGACLIGLRGTVIKSHGAANQRAFTAAIEQAMQAVERQIPERIAARLDAVLPKSD.

Belongs to the PlsX family. In terms of assembly, homodimer. Probably interacts with PlsY.

It localises to the cytoplasm. It catalyses the reaction a fatty acyl-[ACP] + phosphate = an acyl phosphate + holo-[ACP]. The protein operates within lipid metabolism; phospholipid metabolism. Its function is as follows. Catalyzes the reversible formation of acyl-phosphate (acyl-PO(4)) from acyl-[acyl-carrier-protein] (acyl-ACP). This enzyme utilizes acyl-ACP as fatty acyl donor, but not acyl-CoA. This chain is Phosphate acyltransferase, found in Sodalis glossinidius (strain morsitans).